Reading from the N-terminus, the 289-residue chain is tRNA-cytidine(32) 2-sulfurtransferase (289 aa).

A PP-loop motif motif is present at residues 39–44 (SGGKDS). [4Fe-4S] cluster contacts are provided by C114, C117, and C205.

It belongs to the TtcA family. As to quaternary structure, homodimer. The cofactor is Mg(2+). Requires [4Fe-4S] cluster as cofactor.

Its subcellular location is the cytoplasm. It carries out the reaction cytidine(32) in tRNA + S-sulfanyl-L-cysteinyl-[cysteine desulfurase] + AH2 + ATP = 2-thiocytidine(32) in tRNA + L-cysteinyl-[cysteine desulfurase] + A + AMP + diphosphate + H(+). It participates in tRNA modification. Functionally, catalyzes the ATP-dependent 2-thiolation of cytidine in position 32 of tRNA, to form 2-thiocytidine (s(2)C32). The sulfur atoms are provided by the cysteine/cysteine desulfurase (IscS) system. In Deinococcus geothermalis (strain DSM 11300 / CIP 105573 / AG-3a), this protein is tRNA-cytidine(32) 2-sulfurtransferase.